The primary structure comprises 393 residues: Sugar efflux transporter A (393 aa).

The next 12 membrane-spanning stretches (helical) occupy residues 22–42, 51–71, 82–102, 107–127, 152–172, 174–194, 219–239, 253–273, 287–307, 308–328, 344–364, and 366–386; these read VIAF…SLFL, FMVG…SQIL, KTLI…YAWN, VLLF…PQLF, ISLS…GFGF, AMYL…WLLL, LLLF…LINM, LAGV…LLAG, LAVI…GSWA, LLAL…MGML, LFTN…GIVA, and VWSY…AAVC.

Belongs to the major facilitator superfamily. Set transporter family.

It is found in the cell inner membrane. In terms of biological role, involved in the efflux of sugars. The physiological role may be the reduction of the intracellular concentration of toxic sugars or sugar metabolites. Transports IPTG, lactose and arabinose. The sequence is that of Sugar efflux transporter A (sotA) from Dickeya chrysanthemi (Pectobacterium chrysanthemi).